A 510-amino-acid polypeptide reads, in one-letter code: Maturase K (510 aa).

The protein belongs to the intron maturase 2 family. MatK subfamily.

It is found in the plastid. It localises to the chloroplast. In terms of biological role, usually encoded in the trnK tRNA gene intron. Probably assists in splicing its own and other chloroplast group II introns. This chain is Maturase K, found in Spirodela intermedia (Intermediate duckweed).